Here is a 260-residue protein sequence, read N- to C-terminus: E3 ubiquitin-protein ligase SRFP1 (260 aa).

The CHY-type zinc finger occupies 11–80 (FGRMGFGCKH…VAQVCYNCGV (70 aa)). Zn(2+)-binding residues include C18, H20, C31, C32, C38, C41, H42, H50, C62, C65, C75, C78, C87, C90, H103, C104, C107, C110, H120, C121, C124, C127, H136, and C138. Residues 82–146 (MGEYFCSACK…CCIENSMKNN (65 aa)) form a CTCHY-type zinc finger. The RING-type; atypical zinc finger occupies 147–190 (CPICYEYLFDSLRETSVLRCGHTMHLQCFHEMLKHDKFSCPICS).

Expressed in roots, leaves, nodes and panicles.

The protein resides in the nucleus. It localises to the cytoplasm. The catalysed reaction is S-ubiquitinyl-[E2 ubiquitin-conjugating enzyme]-L-cysteine + [acceptor protein]-L-lysine = [E2 ubiquitin-conjugating enzyme]-L-cysteine + N(6)-ubiquitinyl-[acceptor protein]-L-lysine.. It participates in protein modification; protein ubiquitination. Functionally, possesses E3 ubiquitin-protein ligase activity in vitro. Possesses transactivation activity in yeast cells. May modulate abiotic stress responses by negatively regulating antioxidant enzymes-mediated reactive oxygen species (ROS) removal. This is E3 ubiquitin-protein ligase SRFP1 from Oryza sativa subsp. japonica (Rice).